The primary structure comprises 431 residues: Adenylosuccinate synthetase (431 aa).

GTP is bound by residues 13 to 19 (GDEGKGK) and 41 to 43 (GHT). The active-site Proton acceptor is the aspartate 14. Mg(2+)-binding residues include aspartate 14 and glycine 41. Residues 14 to 17 (DEGK), 39 to 42 (NAGH), threonine 130, arginine 144, glutamine 225, threonine 240, and arginine 304 each bind IMP. Residue histidine 42 is the Proton donor of the active site. 300 to 306 (ATTGRKR) provides a ligand contact to substrate. Residues arginine 306, 332 to 334 (KLD), and 415 to 417 (STG) contribute to the GTP site.

Belongs to the adenylosuccinate synthetase family. In terms of assembly, homodimer. Mg(2+) is required as a cofactor.

The protein localises to the cytoplasm. It carries out the reaction IMP + L-aspartate + GTP = N(6)-(1,2-dicarboxyethyl)-AMP + GDP + phosphate + 2 H(+). The protein operates within purine metabolism; AMP biosynthesis via de novo pathway; AMP from IMP: step 1/2. Plays an important role in the de novo pathway of purine nucleotide biosynthesis. Catalyzes the first committed step in the biosynthesis of AMP from IMP. This Shewanella loihica (strain ATCC BAA-1088 / PV-4) protein is Adenylosuccinate synthetase.